The following is a 395-amino-acid chain: Demethylmacrocin O-methyltransferase (395 aa).

The catalysed reaction is demethylmacrocin + S-adenosyl-L-methionine = macrocin + S-adenosyl-L-homocysteine + H(+). It participates in antibiotic biosynthesis; tylosin biosynthesis. Functionally, O-methyltransferase that catalyzes the conversion of demethylmacrocin to macrocin, the penultimate step of tylosin antibiotic biosynthesis. Also able to mediate the conversion of demethyllactenocin to lactenocin. The chain is Demethylmacrocin O-methyltransferase (tylE) from Streptomyces fradiae (Streptomyces roseoflavus).